A 1337-amino-acid chain; its full sequence is ABC transporter D family member 1 (1337 aa).

The next 4 helical transmembrane spans lie at 24 to 44 (ILLAAGIVAAGGTAVYLKSRV), 142 to 162 (APLFLRLISENIMLCFMLSTL), 247 to 267 (YASPKYIFWILAYVLGAGTAI), and 342 to 362 (FLLKYLGATVAVILIIEPFFS). In terms of domain architecture, ABC transmembrane type-1 1 spans 117 to 395 (VFRTALSNRL…SVIISLFQAL (279 aa)). Positions 448-695 (VEFSDVKVVT…DAMVVQRAFA (248 aa)) constitute an ABC transporter 1 domain. 481 to 488 (GPNGSGKS) contributes to the ATP binding site. The region spanning 751-1049 (LIPTIFDKQG…VVSQSFMAFG (299 aa)) is the ABC transmembrane type-1 2 domain. The helical transmembrane segment at 900–920 (LLTGQRGVAILYTYMLLGLGF) threads the bilayer. The 247-residue stretch at 1091 to 1337 (LDSQDLLSFS…ELRSIEQTTE (247 aa)) folds into the ABC transporter 2 domain. 1130 to 1137 (GPNGSGKT) serves as a coordination point for ATP.

This sequence belongs to the ABC transporter superfamily. ABCD family. Peroxisomal fatty acyl CoA transporter (TC 3.A.1.203) subfamily.

It is found in the peroxisome membrane. Its subcellular location is the glyoxysome membrane. It catalyses the reaction an acyl-CoA(out) + ATP + H2O = an acyl-CoA(in) + ADP + phosphate + H(+). Its function is as follows. Contributes to the transport of fatty acids and their derivatives (acyl CoAs) across the peroxisomal membrane. Provides acetate to the glyoxylate cycle in developing seedlings. Involved in pollen tube elongation, ovule fertilization, and seeds germination after imbibition (controls the switch between the opposing developmental programs of dormancy and germination), probably by promoting beta-oxidation of storage lipids during gluconeogenesis. Required for biosynthesis of jasmonic acid and conversion of indole butyric acid to indole acetic acid. Confers sensitivity to monofluoroacetic acid (FAc), a toxic acetate analog, and to 2,4-dichlorophenoxybutyric acid (2,4-DB) and indole-3-butyric acid (IBA), two precursors of auxin after beta-oxidation. The chain is ABC transporter D family member 1 from Arabidopsis thaliana (Mouse-ear cress).